The chain runs to 143 residues: uncharacterized protein (143 aa).

Positions Ser-13–Gln-143 are disordered. Over residues Pro-17–Thr-31 the composition is skewed to basic residues. Composition is skewed to basic and acidic residues over residues Ala-35–Ala-48, Asp-84–Lys-96, and Glu-112–Gly-133. Residues Gln-134–Gln-143 show a composition bias toward low complexity.

This is an uncharacterized protein from Homo sapiens (Human).